Consider the following 122-residue polypeptide: Small ribosomal subunit protein uS12c (122 aa).

It belongs to the universal ribosomal protein uS12 family. In terms of assembly, part of the 30S ribosomal subunit.

The protein localises to the plastid. The protein resides in the chloroplast. In terms of biological role, with S4 and S5 plays an important role in translational accuracy. Located at the interface of the 30S and 50S subunits. This Illicium oligandrum (Star anise) protein is Small ribosomal subunit protein uS12c (rps12).